Reading from the N-terminus, the 256-residue chain is Calsenilin (256 aa).

The interval 1 to 30 is disordered; the sequence is MQRAKEVMKVSDGSLLGEPGRTPLSKKEGV. S14 carries the phosphoserine modification. K26 participates in a covalent cross-link: Glycyl lysine isopeptide (Lys-Gly) (interchain with G-Cter in SUMO1). 2 S-palmitoyl cysteine lipidation sites follow: C45 and C46. Phosphoserine is present on residues S60 and S63. Residues 67–123 enclose the EF-hand 1; degenerate domain; it reads LELSAVRHQPEGLDQLQAQTKFTKKELQSLYRGFKNECPTGLVDEDTFKLIYSQFFP. A Glycyl lysine isopeptide (Lys-Gly) (interchain with G-Cter in SUMO1) cross-link involves residue K90. EF-hand domains lie at 126–161, 162–197, and 210–245; these read DATT…LLRG, TVHE…IYDM, and APLE…DENI. Ca(2+) contacts are provided by D175, N177, D179, Y181, E186, D223, N225, D227, and E234. The segment at 243-256 is interaction with KCND2; sequence ENIMSSMQLFENVI.

It belongs to the recoverin family. In terms of assembly, binds to DNA as a homomultimer. Dimerization is induced by binding to calcium. Interacts with the C-terminus of PSEN1 and PSEN2 and with PSEN2 CTF subunit. Associates with KCN1. Component of heteromultimeric potassium channels. Identified in potassium channel complexes containing KCND1, KCND2, KCND3, KCNIP1, KCNIP2, KCNIP3, KCNIP4, DPP6 and DPP10. Interacts with KCND2 and KCND3. Post-translationally, palmitoylated. Palmitoylation enhances association with the plasma membrane. Proteolytically cleaved by caspase-3.

Its subcellular location is the cytoplasm. It is found in the cell membrane. It localises to the endoplasmic reticulum. The protein resides in the golgi apparatus. The protein localises to the nucleus. Its function is as follows. Regulatory subunit of Kv4/D (Shal)-type voltage-gated rapidly inactivating A-type potassium channels, such as KCND2/Kv4.2 and KCND3/Kv4.3. Modulates channel expression at the cell membrane, gating characteristics, inactivation kinetics and rate of recovery from inactivation in a calcium-dependent and isoform-specific manner. Functionally, may play a role in the regulation of PSEN2 proteolytic processing and apoptosis. Together with PSEN2 involved in modulation of amyloid-beta formation. Calcium-dependent transcriptional repressor that binds to the DRE element of genes including PDYN and FOS. Affinity for DNA is reduced upon binding to calcium and enhanced by binding to magnesium. Seems to be involved in nociception. The chain is Calsenilin (KCNIP3) from Bos taurus (Bovine).